The chain runs to 408 residues: COP9 signalosome complex subunit 4 (408 aa).

Residues 194–374 (RIQDARRRFL…GIIYFESNTT (181 aa)) form the PCI domain.

The protein belongs to the CSN4 family. In terms of assembly, component of the COP9 signalosome (CSN) complex.

The protein resides in the cytoplasm. It is found in the nucleus. Component of the COP9 signalosome (CSN) complex that acts as an regulator of the ubiquitin (Ubl) conjugation pathway by mediating the deneddylation of the cullin subunit of SCF-type E3 ubiquitin-protein ligase complexes. The CSN complex seems to link protein degradation to sexual development. Required for fruit body formation. This Emericella nidulans (strain FGSC A4 / ATCC 38163 / CBS 112.46 / NRRL 194 / M139) (Aspergillus nidulans) protein is COP9 signalosome complex subunit 4 (csnD).